A 185-amino-acid chain; its full sequence is Elongation factor P (185 aa).

This sequence belongs to the elongation factor P family.

Its subcellular location is the cytoplasm. Its pathway is protein biosynthesis; polypeptide chain elongation. Functionally, involved in peptide bond synthesis. Stimulates efficient translation and peptide-bond synthesis on native or reconstituted 70S ribosomes in vitro. Probably functions indirectly by altering the affinity of the ribosome for aminoacyl-tRNA, thus increasing their reactivity as acceptors for peptidyl transferase. The sequence is that of Elongation factor P from Methylobacillus flagellatus (strain ATCC 51484 / DSM 6875 / VKM B-1610 / KT).